Here is a 320-residue protein sequence, read N- to C-terminus: Acetyl-coenzyme A carboxylase carboxyl transferase subunit alpha (320 aa).

In terms of domain architecture, CoA carboxyltransferase C-terminal spans 42 to 295 (IEEKAVQALN…GDAIAAAFAE (254 aa)).

Belongs to the AccA family. In terms of assembly, acetyl-CoA carboxylase is a heterohexamer composed of biotin carboxyl carrier protein (AccB), biotin carboxylase (AccC) and two subunits each of ACCase subunit alpha (AccA) and ACCase subunit beta (AccD).

It is found in the cytoplasm. The enzyme catalyses N(6)-carboxybiotinyl-L-lysyl-[protein] + acetyl-CoA = N(6)-biotinyl-L-lysyl-[protein] + malonyl-CoA. It functions in the pathway lipid metabolism; malonyl-CoA biosynthesis; malonyl-CoA from acetyl-CoA: step 1/1. Component of the acetyl coenzyme A carboxylase (ACC) complex. First, biotin carboxylase catalyzes the carboxylation of biotin on its carrier protein (BCCP) and then the CO(2) group is transferred by the carboxyltransferase to acetyl-CoA to form malonyl-CoA. The polypeptide is Acetyl-coenzyme A carboxylase carboxyl transferase subunit alpha (Rhodopseudomonas palustris (strain HaA2)).